The following is a 66-amino-acid chain: DNA-directed RNA polymerase subunit omega (66 aa).

It belongs to the RNA polymerase subunit omega family. In terms of assembly, the RNAP catalytic core consists of 2 alpha, 1 beta, 1 beta' and 1 omega subunit. When a sigma factor is associated with the core the holoenzyme is formed, which can initiate transcription.

The catalysed reaction is RNA(n) + a ribonucleoside 5'-triphosphate = RNA(n+1) + diphosphate. In terms of biological role, promotes RNA polymerase assembly. Latches the N- and C-terminal regions of the beta' subunit thereby facilitating its interaction with the beta and alpha subunits. In Clostridium botulinum (strain Eklund 17B / Type B), this protein is DNA-directed RNA polymerase subunit omega.